The following is a 178-amino-acid chain: Crossover junction endodeoxyribonuclease RuvC (178 aa).

Catalysis depends on residues aspartate 8, glutamate 72, and aspartate 144. Mg(2+) is bound by residues aspartate 8, glutamate 72, and aspartate 144.

It belongs to the RuvC family. As to quaternary structure, homodimer which binds Holliday junction (HJ) DNA. The HJ becomes 2-fold symmetrical on binding to RuvC with unstacked arms; it has a different conformation from HJ DNA in complex with RuvA. In the full resolvosome a probable DNA-RuvA(4)-RuvB(12)-RuvC(2) complex forms which resolves the HJ. It depends on Mg(2+) as a cofactor.

Its subcellular location is the cytoplasm. It carries out the reaction Endonucleolytic cleavage at a junction such as a reciprocal single-stranded crossover between two homologous DNA duplexes (Holliday junction).. In terms of biological role, the RuvA-RuvB-RuvC complex processes Holliday junction (HJ) DNA during genetic recombination and DNA repair. Endonuclease that resolves HJ intermediates. Cleaves cruciform DNA by making single-stranded nicks across the HJ at symmetrical positions within the homologous arms, yielding a 5'-phosphate and a 3'-hydroxyl group; requires a central core of homology in the junction. The consensus cleavage sequence is 5'-(A/T)TT(C/G)-3'. Cleavage occurs on the 3'-side of the TT dinucleotide at the point of strand exchange. HJ branch migration catalyzed by RuvA-RuvB allows RuvC to scan DNA until it finds its consensus sequence, where it cleaves and resolves the cruciform DNA. This chain is Crossover junction endodeoxyribonuclease RuvC, found in Idiomarina loihiensis (strain ATCC BAA-735 / DSM 15497 / L2-TR).